Here is a 701-residue protein sequence, read N- to C-terminus: MTTANLLVELFVEELPPKALKKLGEAFAAALTESLVAQGLVHAQAAVTHFASPRRLGAHIENVLERSADKPVSTKLMPVSVGLDADGNATPALLKRLAALGADASAVATLRRESDGKAEALFMDSVAKGISLGLGLAKALWESLDKLPIPKVMSYQLADGWSTVNFVRPVHGLVALHGTDPVDVRMFGLTAGRKTHGHRFEAAADPIVLKDADSYAQQLESEGAVIANFAERRAEIVRQLEAAAAPLGLVPVEDEALLDEVTALVERPNVLLGQFEQAFLEVPQECLILTMKANQKYFPLLDAAGKLTNKFLIVSNISPADASAVVGGNERVVRPRLADAKFFFDQDRKKTLDARVLGLAKVVYHNKLGTQGERVTRVQAVARAIGEKLGGEALALKADQAALLAKADLLTDMVGEFPELQGVMGRYYAQHDGVADDVAFAIEDHYRPRFAGDDLPRNPVGVCVALADKLETLVGLFGIGEKPTGDKDPFALRRHALGVVRMLIEKHLPIGLNELVSIAFSAFQQGLLGQAHTDVYLFMFERLSGAMREQGYSANEVDAVLSLNPIRIDLVPQQLEAVRAFAALPEAAALAAANKRVGNILKKAEGEVGASADPGRFVEAAERALFAALDEVAPRAAAAFGSGDYTASLQALAALKAPVDAFFDQVMVNADDPALRANRLALLNQLHRTMNRVADISRLAA.

Belongs to the class-II aminoacyl-tRNA synthetase family. In terms of assembly, tetramer of two alpha and two beta subunits.

Its subcellular location is the cytoplasm. The enzyme catalyses tRNA(Gly) + glycine + ATP = glycyl-tRNA(Gly) + AMP + diphosphate. This chain is Glycine--tRNA ligase beta subunit, found in Thiobacillus denitrificans (strain ATCC 25259 / T1).